We begin with the raw amino-acid sequence, 198 residues long: Recombination protein RecR (198 aa).

The C4-type zinc-finger motif lies at 57–72; sequence CSVCGNLTDDDPCLIC. The Toprim domain occupies 80-175; the sequence is SVILVVEDSK…KVTRLARGLA (96 aa).

It belongs to the RecR family.

Functionally, may play a role in DNA repair. It seems to be involved in an RecBC-independent recombinational process of DNA repair. It may act with RecF and RecO. This is Recombination protein RecR from Streptococcus agalactiae serotype Ia (strain ATCC 27591 / A909 / CDC SS700).